A 380-amino-acid chain; its full sequence is MSLNVFWFLPTHGDGRYLGSTEGARHVDYGYLQQVAQAAERQGFGGVLLPTGRSCEDSWLVAASLIPVTQRLKFLVALRPGVISPTIAARQAATLDRLSNGRALFNLVTGGDPEELAAEGLFLSHEERYEASAEFTHIWRRLLEGETVDFAGKHIQVKDAKLLYPPVQQPRPPLYFGGSSEAAQNLAAEQVDLYLTWGEPPEQVKEKLAEVRDKAAAQGREVRFGIRLHVIVRETTEEAWQAADRLISHLDEKTIADAQAALARFDSVGQQRMAALHGGKKDKLEISPNLWAGIGLVRGGAGTALVGDGPTVAERIQEYADLGIDTFILSGYPHLEEAYRVGELLFPHLDLAQQPTPLHAVNNAGEVVANRYVPRKVSQS.

It belongs to the SsuD family. Homotetramer.

The enzyme catalyses an alkanesulfonate + FMNH2 + O2 = an aldehyde + FMN + sulfite + H2O + 2 H(+). Its function is as follows. Catalyzes the desulfonation of aliphatic sulfonates. The chain is Alkanesulfonate monooxygenase from Pectobacterium carotovorum subsp. carotovorum (strain PC1).